Consider the following 270-residue polypeptide: MFRNQYDTDVTTWSPAGRLFQVEYAMEAVKQGSACVGLRSRTHAVLAAANKAASELSSHQRKVFRVADHAGVALAGLTADGRVLSRFLRSECINHAFVYDAPLPVSRLALRLADKAQVCTQRSWKRPYGVGLLVAGLDESGAHLYYNCPSGNYFEYQAFAIGSRSQAAKTFLERRFEGYNDYTPEQLIKDALSAIKETLQGEKLTSSNCTVAIVGRKDDGTVEPFEMIDVKRIQEIIDSMEAAEEAPAAEAESSSMQEEDKGTDAAPMDI.

The segment at 239–270 (SMEAAEEAPAAEAESSSMQEEDKGTDAAPMDI) is disordered. The span at 245–256 (EAPAAEAESSSM) shows a compositional bias: low complexity.

Belongs to the peptidase T1A family. In terms of assembly, the 26S proteasome consists of a 20S proteasome core and two 19S regulatory subunits. The 20S proteasome core is composed of 28 subunits that are arranged in four stacked rings, resulting in a barrel-shaped structure. The two end rings are each formed by seven alpha subunits, and the two central rings are each formed by seven beta subunits. The catalytic chamber with the active sites is on the inside of the barrel.

The protein resides in the cytoplasm. Its subcellular location is the nucleus. In terms of biological role, the proteasome is a multicatalytic proteinase complex which is characterized by its ability to cleave peptides with Arg, Phe, Tyr, Leu, and Glu adjacent to the leaving group at neutral or slightly basic pH. The proteasome has an ATP-dependent proteolytic activity. This is Proteasome subunit alpha type-1 (PAF1) from Oryza sativa subsp. japonica (Rice).